The primary structure comprises 158 residues: 6,7-dimethyl-8-ribityllumazine synthase (158 aa).

5-amino-6-(D-ribitylamino)uracil is bound by residues Phe22, 57 to 59 (SYE), and 81 to 83 (TVI). His89 functions as the Proton donor in the catalytic mechanism. Phe114 contributes to the 5-amino-6-(D-ribitylamino)uracil binding site. Residue Arg128 participates in (2S)-2-hydroxy-3-oxobutyl phosphate binding.

This sequence belongs to the DMRL synthase family. As to quaternary structure, forms an icosahedral capsid composed of 60 subunits, arranged as a dodecamer of pentamers.

It carries out the reaction (2S)-2-hydroxy-3-oxobutyl phosphate + 5-amino-6-(D-ribitylamino)uracil = 6,7-dimethyl-8-(1-D-ribityl)lumazine + phosphate + 2 H2O + H(+). Its pathway is cofactor biosynthesis; riboflavin biosynthesis; riboflavin from 2-hydroxy-3-oxobutyl phosphate and 5-amino-6-(D-ribitylamino)uracil: step 1/2. Catalyzes the formation of 6,7-dimethyl-8-ribityllumazine by condensation of 5-amino-6-(D-ribitylamino)uracil with 3,4-dihydroxy-2-butanone 4-phosphate. This is the penultimate step in the biosynthesis of riboflavin. The sequence is that of 6,7-dimethyl-8-ribityllumazine synthase from Blochmanniella pennsylvanica (strain BPEN).